The chain runs to 232 residues: Ubiquitin-conjugating enzyme E2-24 kDa (232 aa).

Over residues 1–37 the composition is skewed to low complexity; sequence MSSTPAAGSAAEVATSSATSNAPSAPSTTASNVSNTS. Residues 1-87 form a disordered region; sequence MSSTPAAGSA…PRISRALGTS (87 aa). The segment covering 58-67 has biased composition (gly residues); the sequence is GASGSNAGGG. The UBC core domain maps to 86–232; it reads TSAKRIQKEL…ARLWTKRYAT (147 aa). Residue Cys-170 is the Glycyl thioester intermediate of the active site.

This sequence belongs to the ubiquitin-conjugating enzyme family.

The catalysed reaction is S-ubiquitinyl-[E1 ubiquitin-activating enzyme]-L-cysteine + [E2 ubiquitin-conjugating enzyme]-L-cysteine = [E1 ubiquitin-activating enzyme]-L-cysteine + S-ubiquitinyl-[E2 ubiquitin-conjugating enzyme]-L-cysteine.. The protein operates within protein modification; protein ubiquitination. Its function is as follows. Catalyzes the covalent attachment of ubiquitin to other proteins. This is Ubiquitin-conjugating enzyme E2-24 kDa from Drosophila melanogaster (Fruit fly).